The primary structure comprises 390 residues: DNA polymerase IV (390 aa).

In terms of domain architecture, UmuC spans 6–187; it reads VMHVDLDAFF…LDIAVMPGIG (182 aa). Mg(2+) contacts are provided by Asp-10 and Asp-105. The active site involves Glu-106.

It belongs to the DNA polymerase type-Y family. As to quaternary structure, monomer. It depends on Mg(2+) as a cofactor.

The protein localises to the cytoplasm. It catalyses the reaction DNA(n) + a 2'-deoxyribonucleoside 5'-triphosphate = DNA(n+1) + diphosphate. Poorly processive, error-prone DNA polymerase involved in untargeted mutagenesis. Copies undamaged DNA at stalled replication forks, which arise in vivo from mismatched or misaligned primer ends. These misaligned primers can be extended by PolIV. Exhibits no 3'-5' exonuclease (proofreading) activity. May be involved in translesional synthesis, in conjunction with the beta clamp from PolIII. The polypeptide is DNA polymerase IV (Dehalococcoides mccartyi (strain ATCC BAA-2100 / JCM 16839 / KCTC 5957 / BAV1)).